Reading from the N-terminus, the 238-residue chain is Zwei Ig domain protein zig-2 (238 aa).

The first 17 residues, 1–17 (MLKFTAISFVLLNAAES), serve as a signal peptide directing secretion. Positions 31 to 130 (PLLKFTRTPN…NGLTKLEHVA (100 aa)) constitute an Ig-like C2-type 1 domain. N-linked (GlcNAc...) asparagine glycosylation is found at Asn-40 and Asn-43. Cys-54 and Cys-117 are disulfide-bonded. Residues Asn-137, Asn-206, and Asn-216 are each glycosylated (N-linked (GlcNAc...) asparagine). Positions 149-230 (PFISMTVDFR…NHFGETTAIT (82 aa)) constitute an Ig-like C2-type 2 domain. A disulfide bond links Cys-170 and Cys-217.

In terms of tissue distribution, expressed in PVT neurons and weakly in some head neurons.

It is found in the secreted. Functionally, probably not involved in maintaining the position of ASI and ASH head neuron cell bodies and ventral nerve cord axons of PVQ, PVP, RMEV, AVK and HSN neurons. The polypeptide is Zwei Ig domain protein zig-2 (Caenorhabditis elegans).